The primary structure comprises 465 residues: Keratin, type I cytoskeletal 13 (465 aa).

Positions 1-28 (MNFTSFSITQGSRPQPPSTRGFSGNSFK) are enriched in polar residues. Residues 1 to 47 (MNFTSFSITQGSRPQPPSTRGFSGNSFKSDLIPQSRRSHSVYGTPGS) form a disordered region. The head stretch occupies residues 1–98 (MNFTSFSITQ…SGGSDLLLGT (98 aa)). The tract at residues 99–135 (SGKEAMQNLNDRLASYLEKVRSLEERNRELEQKIREW) is coil 1A. Residues 100-412 (GKEAMQNLND…ILLEGDEGKF (313 aa)) enclose the IF rod domain. The linker 1 stretch occupies residues 136 to 154 (YEKQGAGTKTKDFSHYFKI). The segment at 155-246 (IADLQKQIHD…KSHDEEMKAL (92 aa)) is coil 1B. The linker 12 stretch occupies residues 247–269 (RSQLGGQVNVEVDAAPAEDLTKK). The coil 2 stretch occupies residues 270–408 (LERMRQQYEQ…RTYRILLEGD (139 aa)). A tail region spans residues 409–465 (EGKFQTSPHHPSIVTKQTETVVTPVVITNVKTVVEEIIDGKIVSKKEYPGPPEKLMI).

It belongs to the intermediate filament family. As to quaternary structure, heterotetramer of two type I and two type II keratins. As to expression, expressed in skin.

Functionally, type 1 keratin. May maintain oral mucosal cell homeostasis and tissue organization in response to mechanical stress. The protein is Keratin, type I cytoskeletal 13 (KRT13) of Protopterus aethiopicus (Marbled lungfish).